A 387-amino-acid chain; its full sequence is Protein-glutamate methylesterase/protein-glutamine glutaminase 1 (387 aa).

In terms of domain architecture, Response regulatory spans 18–136 (RVMVVDDSAV…EISGGTDFRH (119 aa)). D69 bears the 4-aspartylphosphate mark. The CheB-type methylesterase domain occupies 190 to 387 (PAAEERPDII…AYVLRSANKR (198 aa)). Residues S204, H233, and D329 contribute to the active site.

This sequence belongs to the CheB family. Post-translationally, phosphorylated by CheA. Phosphorylation of the N-terminal regulatory domain activates the methylesterase activity.

It localises to the cytoplasm. The enzyme catalyses [protein]-L-glutamate 5-O-methyl ester + H2O = L-glutamyl-[protein] + methanol + H(+). It carries out the reaction L-glutaminyl-[protein] + H2O = L-glutamyl-[protein] + NH4(+). Its function is as follows. Involved in chemotaxis. Part of a chemotaxis signal transduction system that modulates chemotaxis in response to various stimuli. Catalyzes the demethylation of specific methylglutamate residues introduced into the chemoreceptors (methyl-accepting chemotaxis proteins or MCP) by CheR. Also mediates the irreversible deamidation of specific glutamine residues to glutamic acid. In Rhodospirillum rubrum (strain ATCC 11170 / ATH 1.1.1 / DSM 467 / LMG 4362 / NCIMB 8255 / S1), this protein is Protein-glutamate methylesterase/protein-glutamine glutaminase 1.